The sequence spans 721 residues: BBSome complex member bbs-7 (721 aa).

As to quaternary structure, part of BBSome complex, that contains at least bbs-1, bbs-2, bbs-4, bbs-5, osm-12, bbs-8/ttc-8 and bbs-9. Interacts with bbs-1. Expressed in ciliated cells including amphid and both inner and outer labial neurons of the head and in both phasmid neurons PHA and PHB in the tail at larval stages L1 and L2.

It is found in the cell projection. The protein localises to the cilium. Its subcellular location is the cytoplasm. It localises to the cytoskeleton. The protein resides in the cilium basal body. It is found in the cilium axoneme. Component of the BBSome complex. The BBSome complex is thought to function as a coat complex required for sorting of specific membrane proteins to the primary cilia. The BBSome complex is required for ciliogenesis but is dispensable for centriolar satellite function. Required for proper BBSome complex assembly and its ciliary localization. Required for cilia biogenesis and both the assembly and movement of intraflagellar transport proteins along the ciliary axoneme. Plays a role in the removal of degraded mechanosensory receptors within the cilia. Plays a role in guanylyl cyclase localization in the ring-like structures at the base of the finger compartment in AFD sensory neurons. In ciliated sensory neurons, required for the sensation of nitric oxide and avoidance of NO-producing organisms like P.aeruginosa. The polypeptide is BBSome complex member bbs-7 (Caenorhabditis elegans).